The primary structure comprises 850 residues: Pro-neuregulin-2, membrane-bound isoform (850 aa).

The tract at residues M1 to D96 is disordered. Positions M1–A111 are excised as a propeptide. Positions S20 to P59 are enriched in low complexity. N-linked (GlcNAc...) asparagine glycans are attached at residues N52 and N53. The segment covering A60–R74 has biased composition (pro residues). Positions S75–G92 are enriched in low complexity. Residues C112–R405 lie on the Extracellular side of the membrane. N-linked (GlcNAc...) asparagine glycans are attached at residues N147, N278, and N346. Residues P237–S332 form the Ig-like C2-type domain. Cystine bridges form between C257/C311, C345/C359, C353/C370, and C372/C381. In terms of domain architecture, EGF-like spans H341 to L382. The chain crosses the membrane as a helical span at residues V406–A426. Topologically, residues Y427–L850 are cytoplasmic. Disordered stretches follow at residues T492–S535, E566–D585, L647–A681, L700–L788, and A801–L850. Residues S494–S506 show a composition bias toward low complexity. Basic and acidic residues predominate over residues H514–E527. Over residues P651–G665 the composition is skewed to pro residues. Residues G750–S767 show a composition bias toward low complexity.

Belongs to the neuregulin family. In terms of assembly, interacts with ERBB3 and ERBB4. Proteolytic cleavage close to the plasma membrane on the external face leads to the release of the soluble growth factor form. In terms of processing, extensive glycosylation precedes the proteolytic cleavage. In terms of tissue distribution, restricted to the cerebellum in the adult.

Its subcellular location is the cell membrane. The protein localises to the secreted. In terms of biological role, direct ligand for ERBB3 and ERBB4 tyrosine kinase receptors. Concomitantly recruits ERBB1 and ERBB2 coreceptors, resulting in ligand-stimulated tyrosine phosphorylation and activation of the ERBB receptors. May also promote the heterodimerization with the EGF receptor. The polypeptide is Pro-neuregulin-2, membrane-bound isoform (NRG2) (Homo sapiens (Human)).